The sequence spans 305 residues: tRNA dimethylallyltransferase (305 aa).

8 to 15 (GPTASGKT) is a binding site for ATP. 10–15 (TASGKT) contributes to the substrate binding site. The tract at residues 33 to 36 (DSQQ) is interaction with substrate tRNA.

Belongs to the IPP transferase family. Monomer. The cofactor is Mg(2+).

The enzyme catalyses adenosine(37) in tRNA + dimethylallyl diphosphate = N(6)-dimethylallyladenosine(37) in tRNA + diphosphate. Functionally, catalyzes the transfer of a dimethylallyl group onto the adenine at position 37 in tRNAs that read codons beginning with uridine, leading to the formation of N6-(dimethylallyl)adenosine (i(6)A). The protein is tRNA dimethylallyltransferase of Anaeromyxobacter dehalogenans (strain 2CP-1 / ATCC BAA-258).